Here is a 541-residue protein sequence, read N- to C-terminus: Chaperonin GroEL (541 aa).

ATP contacts are provided by residues 29 to 32 (TLGP), 86 to 90 (DGTTT), Gly413, 477 to 479 (DAL), and Asp493.

The protein belongs to the chaperonin (HSP60) family. In terms of assembly, forms a cylinder of 14 subunits composed of two heptameric rings stacked back-to-back. Interacts with the co-chaperonin GroES.

The protein resides in the cytoplasm. The enzyme catalyses ATP + H2O + a folded polypeptide = ADP + phosphate + an unfolded polypeptide.. In terms of biological role, together with its co-chaperonin GroES, plays an essential role in assisting protein folding. The GroEL-GroES system forms a nano-cage that allows encapsulation of the non-native substrate proteins and provides a physical environment optimized to promote and accelerate protein folding. The polypeptide is Chaperonin GroEL (Clostridium beijerinckii (strain ATCC 51743 / NCIMB 8052) (Clostridium acetobutylicum)).